Consider the following 574-residue polypeptide: Glutamyl-tRNA(Gln) amidotransferase subunit B, mitochondrial (574 aa).

Residues M1–P12 constitute a mitochondrion transit peptide. The tract at residues P34–E62 is disordered.

Belongs to the GatB/GatE family. GatB subfamily. In terms of assembly, subunit of the heterotrimeric GatCAB amidotransferase (AdT) complex, composed of A, B and C subunits.

It is found in the mitochondrion. It carries out the reaction L-glutamyl-tRNA(Gln) + L-glutamine + ATP + H2O = L-glutaminyl-tRNA(Gln) + L-glutamate + ADP + phosphate + H(+). Allows the formation of correctly charged Gln-tRNA(Gln) through the transamidation of misacylated Glu-tRNA(Gln) in the mitochondria. The reaction takes place in the presence of glutamine and ATP through an activated gamma-phospho-Glu-tRNA(Gln). The polypeptide is Glutamyl-tRNA(Gln) amidotransferase subunit B, mitochondrial (Ajellomyces capsulatus (strain H143) (Darling's disease fungus)).